The sequence spans 66 residues: Alpha-conotoxin Vc1a (66 aa).

The N-terminal stretch at 1–25 (MGMRMMFTVFLLVVLATTVVSSTSG) is a signal peptide. A propeptide spanning residues 26–47 (RREFRGRNAAAKASDLVSLTDK) is cleaved from the precursor. Disulfide bonds link Cys-51–Cys-57 and Cys-52–Cys-65. A ser-Xaa-Pro motif, crucial for potent interaction with nAChR region spans residues 53–55 (SDP). 2 key region for inhibition of alpha-9-alpha-10/CHRNA9-CHRNA10 nAChR regions span residues 54–56 (DPR) and 60–64 (DHPEI). 4-hydroxyproline is present on Pro-55. The residue at position 63 (Glu-63) is a 4-carboxyglutamate. Cys-65 carries the cysteine amide modification.

The protein belongs to the conotoxin A superfamily. Post-translationally, vc1.1 is described as having no post-translational modifications (except C-terminal amidation), whereas Vc1a contains a hydroxyproline at Pro-55 and a 4-carboxyglutamate at Glu-63 (and a C-terminal amidation). In terms of processing, hydroxylation of Pro-55 is not important for inhibition of alpha-9-alpha-10/CHRNA9-CHRNA10 nAChRs, since [P6O]Vc1.1 (Pro-55 hydroxylated) shows similar inhibition than native toxin (IC(50)=99.1 nM). In contrast, hydroxylation of Pro-55 seems to impair inhibition of HVA calcium channel currents, since [P6O]Vc1.1 has no effect on HVA calcium channel currents. In vivo, hydroxylation of Pro-55 seems to induce the loss of analgesic effects in rat models of neuropathic pain, since [P6O]Vc1.1 has no effect on mechanical allodynia. Gamma-carboxylation of Glu-63 is not important for inhibition of alpha-9-alpha-10/CHRNA9-CHRNA10 nAChRs, since [E14gamma]Vc1.1 (carboxyglutamate at Glu-63) shows similar inhibition than native toxin (IC(50)=65.3 nM). In contrast, gamma-carboxylation of Glu-63 seems to impair inhibition of HVA calcium channel currents, since [E14gamma]Vc1.1 has no effect on HVA calcium channel currents. Post-translationally, non-native isomers 'ribbon' (with disulfide connectivity C1-C4; C2-C3) and 'beads' (with disulfide connectivity C1-C2; C3-C4) of Vc1.1 also inhibit HVA calcium channel currents in rat DRG neurons (20-30% inhibition at 1 uM toxin). It has been shown that both reduced and alkylated Vc1.1 have no effect on HVA calcium channel currents. The observed activity can be attributed to specific isomers. In terms of processing, [C3S]Vc1.1(1-8) mutant is C-terminally amidated. Expressed by the venom duct.

It localises to the secreted. Functionally, alpha-conotoxins act on postsynaptic membranes, they bind to the nicotinic acetylcholine receptors (nAChR) and thus inhibit them. This toxin (native toxin Vc1a; hydroxylated and gamma-carboxylated) blocks alpha-9-alpha-10/CHRNA9-CHRNA10 nAChRs (IC(50)=62.9 nM). In contrast to the non-post-translationally modified analog Vc1.1, Vc1a does not inhibit high voltage-activated (HVA) calcium channel currents. In vivo, in contrast to Vc1.1, Vc1a does not show analgesic effects in rat models of neuropathic pain. In terms of biological role, the synthetic peptide Vc1.1 (a non-hydroxylated and non-gamma-carboxylated analog of Vc1a) has two types of targets. It blocks alpha-9-alpha-10/CHRNA9-CHRNA10 nAChRs (on rat receptors, IC(50)=19-109 nM) (with preference for rat over human receptors) and inhibits high voltage-activated (HVA) calcium channel (Cav2.2, Cav2.3) currents by acting on GABA(B) receptors (GABBR1 and GABBR2) (IC(50)=1.7 nM). It also shows moderate inhibition on alpha-6/alpha-3-beta-2-beta-3 (CHRNA6/CHRNA3-CHRNB2-CHRNB3) (IC(50)=140 nM) and alpha-6/alpha-3-beta-4 (CHRNA6/CHRNA3-CHRNB4) (IC(50)=980 nM). On alpha-9-alpha-10/CHRNA9-CHRNA10 nAChR, it most likely interacts with the alpha-10(+)/alpha-9(-)interface of the receptor. In vivo, it acts as a powerful analgesic in rat models of neuropathic pain. In Conus victoriae (Queen Victoria cone), this protein is Alpha-conotoxin Vc1a.